A 942-amino-acid chain; its full sequence is Isoleucine--tRNA ligase (942 aa).

The short motif at 58-68 is the 'HIGH' region element; the sequence is PYANGDIHIGH. Glu566 provides a ligand contact to L-isoleucyl-5'-AMP. The 'KMSKS' region signature appears at 607–611; it reads KMSKS. Lys610 is an ATP binding site. Zn(2+) contacts are provided by Cys905, Cys908, Cys925, and Cys928.

Belongs to the class-I aminoacyl-tRNA synthetase family. IleS type 1 subfamily. Monomer. Requires Zn(2+) as cofactor.

It localises to the cytoplasm. The enzyme catalyses tRNA(Ile) + L-isoleucine + ATP = L-isoleucyl-tRNA(Ile) + AMP + diphosphate. In terms of biological role, catalyzes the attachment of isoleucine to tRNA(Ile). As IleRS can inadvertently accommodate and process structurally similar amino acids such as valine, to avoid such errors it has two additional distinct tRNA(Ile)-dependent editing activities. One activity is designated as 'pretransfer' editing and involves the hydrolysis of activated Val-AMP. The other activity is designated 'posttransfer' editing and involves deacylation of mischarged Val-tRNA(Ile). The sequence is that of Isoleucine--tRNA ligase from Vibrio campbellii (strain ATCC BAA-1116).